Here is a 172-residue protein sequence, read N- to C-terminus: Stellate protein CG33238 (172 aa).

Belongs to the casein kinase 2 subunit beta family. As to quaternary structure, interacts in vitro with the casein kinase 2 alpha subunit (CkII-alpha). The relevance of such interaction is however unclear in vivo. Probably not expressed in wild-type flies. In males lacking the Y chromosome, it is testis-specific and constitutes the main component of star-shaped crystals.

Unknown. In males lacking the Y chromosome, its strong overexpression leads to the appearance of proteinaceous star-shaped crystals in the primary spermatocytes causing meiotic drive, possibly by interfering with normal casein kinase 2 activity. In Drosophila melanogaster (Fruit fly), this protein is Stellate protein CG33238 (Ste:CG33238).